The chain runs to 617 residues: Probable Xaa-Pro aminopeptidase P (617 aa).

Residues aspartate 414, aspartate 425, glutamate 523, and glutamate 537 each contribute to the Mn(2+) site.

Belongs to the peptidase M24B family. Mn(2+) is required as a cofactor.

The enzyme catalyses Release of any N-terminal amino acid, including proline, that is linked to proline, even from a dipeptide or tripeptide.. In terms of biological role, catalyzes the removal of a penultimate prolyl residue from the N-termini of peptides. The sequence is that of Probable Xaa-Pro aminopeptidase P (AMPP) from Colletotrichum graminicola (strain M1.001 / M2 / FGSC 10212) (Maize anthracnose fungus).